The primary structure comprises 588 residues: Tannase (588 aa).

An N-terminal signal peptide occupies residues 1 to 18; that stretch reads MRQHSRMAVAALAAGANA. Cystine bridges form between C25-C71, C194-C502, and C261-C278. S195 acts as the Acyl-ester intermediate in catalysis. Ca(2+)-binding residues include D262, D265, D269, and V271. A Pyrrolidone carboxylic acid modification is found at Q317. Residues D455 and H501 each act as charge relay system in the active site.

It belongs to the tannase family. In terms of assembly, heterooctamer of 4 33 kDa and 4 30 kDa subunits linked by disulfide bond(s). The protein is glycosylated to a carbohydrate content of 22.7%. In terms of processing, the N-terminus of the 30 kDa subunit is blocked.

The catalysed reaction is digallate + H2O = 2 3,4,5-trihydroxybenzoate + H(+). Its function is as follows. Hydrolyzes ester bonds of tannic acid to produce gallic acid and glucose. The sequence is that of Tannase from Aspergillus oryzae (strain ATCC 42149 / RIB 40) (Yellow koji mold).